We begin with the raw amino-acid sequence, 457 residues long: Autophagy-related protein 14 (457 aa).

Residues arginine 31 to lysine 109 are a coiled coil. Disordered regions lie at residues glutamate 54 to alanine 73, proline 252 to proline 274, and asparagine 433 to arginine 457. Over residues serine 253–threonine 266 the composition is skewed to low complexity.

The protein belongs to the ATG14 family. As to quaternary structure, component of the autophagy-specific VPS34 PI3-kinase complex I.

The protein localises to the preautophagosomal structure membrane. It localises to the vacuole membrane. Required for cytoplasm to vacuole transport (Cvt) and autophagy as a part of the autophagy-specific VPS34 PI3-kinase complex I. This complex is essential to recruit the ATG8-phosphatidylinositol conjugate and the ATG12-ATG5 conjugate to the pre-autophagosomal structure. ATG14 mediates the specific binding of the VPS34 PI3-kinase complex I to the preautophagosomal structure (PAS). Autophagy is required for proper vegetative growth, asexual/sexual reproduction, and full virulence. Autophagy is particularly involved in the biosynthesis of deoxynivalenol (DON), an important virulence determinant. The chain is Autophagy-related protein 14 from Gibberella zeae (strain ATCC MYA-4620 / CBS 123657 / FGSC 9075 / NRRL 31084 / PH-1) (Wheat head blight fungus).